We begin with the raw amino-acid sequence, 304 residues long: Secreted mono- and diacylglycerol lipase MDL3 (304 aa).

The first 19 residues, 1-19, serve as a signal peptide directing secretion; it reads MIVGPVISLLLSYFVLVSG. A disulfide bridge links Cys-55 with Cys-297. N-linked (GlcNAc...) asparagine glycosylation is present at Asn-161. Catalysis depends on Ser-171, which acts as the Nucleophile. Catalysis depends on residues Asp-228 and His-281.

Belongs to the AB hydrolase superfamily. Lipase family. Class 3 subfamily.

It localises to the secreted. It is found in the cell wall. The enzyme catalyses a monoacylglycerol + H2O = glycerol + a fatty acid + H(+). The catalysed reaction is a diacylglycerol + H2O = a monoacylglycerol + a fatty acid + H(+). Secreted lipase involved in Dandruff and seborrheic dermatitis (D/SD) probably via lipase-mediated breakdown of sebaceous lipids and release of irritating free fatty acids. Shows activity against monoglyceride and diglyceride substrates, but not triglyceride substrates and does not exhibit regio-selective production of diacylglycerols. Hydrolyzes distearin, dilinolein, dipalmitoylglycerol and dipalmitolein. Cleaves oleic acid from 1,2 isomers of diolein on both the 1 and the 2 position of the glycerol backbone, resulting mainly in free fatty acids but no monoolein is detected. Shows activity on monoolein and liberates mostly free fatty acids, but can also perform the reverse reaction and produce diolein. The sequence is that of Secreted mono- and diacylglycerol lipase MDL3 from Malassezia globosa (strain ATCC MYA-4612 / CBS 7966) (Dandruff-associated fungus).